We begin with the raw amino-acid sequence, 220 residues long: Early protein OPG038 (220 aa).

The first 17 residues, 1 to 17, serve as a signal peptide directing secretion; that stretch reads MVYKLVLLFCIASLGYS. Residues Asn49, Asn79, Asn118, and Asn154 are each glycosylated (N-linked (GlcNAc...) asparagine; by host).

This sequence belongs to the orthopoxvirus OPG038 family. Homooligomer. Interacts with host CD80 and CD86 when secreted. Post-translationally, glycosylated by host.

The protein localises to the host endoplasmic reticulum. Its subcellular location is the secreted. Plays a role in immune evasion. When secreted, inhibits T-cell activation by preventing the binding of host CD80 and CD86 to soluble CTLA4 and CD28. In the infected cell, may inhibits host NF kappa B activation. The chain is Early protein OPG038 (OPG038) from Cynomys gunnisoni (Gunnison's prairie dog).